The following is a 346-amino-acid chain: Free fatty acid receptor 3 (346 aa).

The Extracellular segment spans residues 1–19 (MDTGPDQSYFSGNHWFVFS). Residues 20 to 40 (VYLLTFLVGLPLNLLALVVFV) traverse the membrane as a helical segment. The Cytoplasmic segment spans residues 41-47 (GKLQRRP). Residues 48–68 (VAVDVLLLNLTASDLLLLLFL) traverse the membrane as a helical segment. The Extracellular segment spans residues 69 to 88 (PFRMVEAANGMHWPLPFILC). A disulfide bridge links Cys-88 with Cys-169. A helical membrane pass occupies residues 89-111 (PLSGFIFFTTIYLTALFLAAVSI). Over 112–132 (ERFLSVAHPLWYKTRPRLGQA) the chain is Cytoplasmic. The chain crosses the membrane as a helical span at residues 133 to 153 (GLVSVACWLLASAHCSVVYVI). Residues 154–178 (EFSGDISHSQGTNGTCYLEFRKDQL) are Extracellular-facing. N-linked (GlcNAc...) asparagine glycosylation is present at Asn-166. A helical transmembrane segment spans residues 179–199 (AILLPVRLEMAVVLFVVPLII). Over 200–222 (TSYCYSRLVWILGRGGSHRRQRR) the chain is Cytoplasmic. The chain crosses the membrane as a helical span at residues 223 to 243 (VAGLLAATLLNFLVCFGPYNV). The Extracellular segment spans residues 244–258 (SHVVGYICGESPAWR). The chain crosses the membrane as a helical span at residues 259-279 (IYVTLLSTLNSCVDPFVYYFS). The Cytoplasmic portion of the chain corresponds to 280–346 (SSGFQADFHE…TGGQVACAES (67 aa)). The span at 307–330 (MELKEQKGGEEQRADRPAERKTSE) shows a compositional bias: basic and acidic residues. The interval 307 to 346 (MELKEQKGGEEQRADRPAERKTSEHSQGCGTGGQVACAES) is disordered.

The protein belongs to the G-protein coupled receptor 1 family. In terms of tissue distribution, highest level in adipose tissue, and lower expression across all tissues tested. Expressed in sympathetic ganglia.

Its subcellular location is the cell membrane. Functionally, g protein-coupled receptor that is activated by a major product of dietary fiber digestion, the short chain fatty acids (SCFAs), and that plays a role in the regulation of whole-body energy homeostasis and in intestinal immunity. In omnivorous mammals, the short chain fatty acids acetate, propionate and butyrate are produced primarily by the gut microbiome that metabolizes dietary fibers. SCFAs serve as a source of energy but also act as signaling molecules. That G protein-coupled receptor is probably coupled to the pertussis toxin-sensitive, G(i/o)-alpha family of G proteins. Its activation results in the formation of inositol 1,4,5-trisphosphate, the mobilization of intracellular calcium, the phosphorylation of the MAPK3/ERK1 and MAPK1/ERK2 kinases and the inhibition of intracellular cAMP accumulation. Activated by SCFAs and by beta-hydroxybutyrate, a ketone body produced by the liver upon starvation, it inhibits N-type calcium channels and modulates the activity of sympathetic neurons through a signaling cascade involving the beta and gamma subunits of its coupled G protein, phospholipase C and MAP kinases. Thereby, it may regulate energy expenditure through the control of the sympathetic nervous system that controls for instance heart rate. Upon activation by SCFAs accumulating in the intestine, it may also signal to the brain via neural circuits which in turn would regulate intestinal gluconeogenesis. May also control the production of hormones involved in whole-body energy homeostasis. May for instance, regulate blood pressure through renin secretion. May also regulate secretion of the PYY peptide by enteroendocrine cells and control gut motility, intestinal transit rate, and the harvesting of energy from SCFAs produced by gut microbiota. May also indirectly regulate the production of LEP/Leptin, a hormone acting on the CNS to inhibit food intake, in response to the presence of short-chain fatty acids in the intestine. Finally, may also play a role in glucose homeostasis. Besides its role in energy homeostasis, may play a role in intestinal immunity. May mediate the activation of the inflammatory and immune response by SCFAs in the gut, regulating the rapid production of chemokines and cytokines by intestinal epithelial cells. Among SCFAs, the fatty acids containing less than 6 carbons, the most potent activators are probably propionate, butyrate and pentanoate while acetate is a poor activator. The sequence is that of Free fatty acid receptor 3 (FFAR3) from Homo sapiens (Human).